Reading from the N-terminus, the 936-residue chain is Myocardin-related transcription factor A (936 aa).

RPEL repeat units follow at residues 15 to 40 (TVLQ…PPLK), 59 to 84 (DYLK…EETS), and 103 to 128 (DDLN…PVET). The short motif at 62–100 (KRKIRSRPERAELVRMHILEETSAEPSLQAKQIKLKRAR) is the Bipartite Nuclear localization signal element. 3 disordered regions span residues 146–185 (SSFD…TQIP), 234–258 (SQPK…KVKK), and 401–422 (SQDP…QAKP). Residues 160–170 (QPASQESQGSI) are compositionally biased toward polar residues. The span at 239 to 254 (SFEKSQRIKKPKEPKP) shows a compositional bias: basic and acidic residues. The region spanning 368-402 (LDEMKVAELKLELKHRGLPVSGTKIDLIERLKASQ) is the SAP domain. The span at 404–416 (PSTATAASAKPTP) shows a compositional bias: low complexity. Residues 497–542 (DARDKDLMLREKDRQIEELTQRLKQKQELVERLRQQLEQEKRTPQH) adopt a coiled-coil conformation. The interval 707–755 (HNESPATPPQQPEPEPPPHSIFLTHSSPQWSKNPPGYDEAMKQQPNSCE) is disordered. Pro residues predominate over residues 712–725 (ATPPQQPEPEPPPH). A compositionally biased stretch (polar residues) spans 729–738 (LTHSSPQWSK).

As to quaternary structure, interacts with srf, forming the srf-mrtfa nuclear complex which binds the 5'-CArG-3' consensus motif (CArG box) on DNA via srf. Interacts (via RPEL repeats) with globular actin (G-actin), thereby regulating its subcellular location and activity of the complex formed with srf.

Its subcellular location is the cytoplasm. It localises to the nucleus. Its function is as follows. Transcription coactivator that associates with the serum response factor (srf) transcription factor to control expression of genes regulating the cytoskeleton during development, morphogenesis and cell migration. The srf-mrtfa complex activity responds to Rho GTPase-induced changes in cellular globular actin (G-actin) concentration, thereby coupling cytoskeletal gene expression to cytoskeletal dynamics. Mrtfa binds G-actin via its RPEL repeats, regulating activity of the mrtfa-srf complex. Activity is also regulated by filamentous actin (F-actin) in the nucleus. This is Myocardin-related transcription factor A (mrtfa) from Xenopus laevis (African clawed frog).